We begin with the raw amino-acid sequence, 359 residues long: Leafy/floricaula homolog FL1 (359 aa).

The segment at 113-170 (SEEQVVQHSEKDQLGRAGSGDTAGTSWGAQQQRKKHRHRHHITAMKGAATEEDEEDEE) is disordered. A compositionally biased stretch (basic residues) spans 144–155 (QRKKHRHRHHIT). DNA-binding regions lie at residues 179 to 183 (REHPF), 248 to 255 (NKPKMRHY), and 320 to 323 (YVPT). A compositionally biased stretch (low complexity) spans 340 to 352 (ASSASTSTSAPTA). A disordered region spans residues 340–359 (ASSASTSTSAPTAHHLELPY).

This sequence belongs to the FLO/LFY family. In terms of tissue distribution, expressed strongly in the early floral primordium and then successively in the primordia of sepals, petals, stamens and carpels. Also in the leaf primordia and young leaves.

The protein localises to the nucleus. Probable transcription factor. This is Leafy/floricaula homolog FL1 (LF1) from Eucalyptus globulus (Tasmanian blue gum).